The sequence spans 357 residues: U5 small nuclear ribonucleoprotein 40 kDa protein (357 aa).

Residue lysine 18 forms a Glycyl lysine isopeptide (Lys-Gly) (interchain with G-Cter in SUMO2) linkage. Arginine 21 is subject to Asymmetric dimethylarginine. WD repeat units follow at residues 64 to 103 (GHEG…GNYA), 107 to 146 (GYSG…RVKR), 149 to 189 (GHTS…AIQT), 191 to 230 (QNTY…LTYT), 233 to 272 (GHAD…PKER), 283 to 322 (NFEK…ILYK), and 325 to 357 (GHAG…GEIQ). Lysine 270 is covalently cross-linked (Glycyl lysine isopeptide (Lys-Gly) (interchain with G-Cter in SUMO2)).

Component of the pre-catalytic and catalytic spliceosome complexes. Component of the postcatalytic spliceosome P complex. Part of the U5 snRNP complex. Interacts with PRPF8. Component of the U4/U6-U5 tri-snRNP complex composed of the U4, U6 and U5 snRNAs and at least PRPF3, PRPF4, PRPF6, PRPF8, PRPF31, SNRNP200, TXNL4A, WDR57, SNRNP40, DDX23, CD2BP2, PPIH, SNU13, EFTUD2, SART1 and USP39. Component of the minor spliceosome, which splices U12-type introns.

It is found in the nucleus. Its function is as follows. Required for pre-mRNA splicing as component of the activated spliceosome. Component of the U5 small nuclear ribonucleoprotein (snRNP) complex and the U4/U6-U5 tri-snRNP complex, building blocks of the spliceosome. As a component of the minor spliceosome, involved in the splicing of U12-type introns in pre-mRNAs. This is U5 small nuclear ribonucleoprotein 40 kDa protein (SNRNP40) from Pongo abelii (Sumatran orangutan).